Here is a 629-residue protein sequence, read N- to C-terminus: Phosphomethylpyrimidine synthase (629 aa).

Residues 1-30 (MTTKLKNASNLSESAQVDQQSVQPFTRSQK) are disordered. Substrate-binding positions include Asn-233, Met-262, Tyr-291, His-327, 347-349 (SRG), 388-391 (DGLR), and Glu-427. Zn(2+) is bound at residue His-431. Tyr-454 is a substrate binding site. His-495 lines the Zn(2+) pocket. [4Fe-4S] cluster contacts are provided by Cys-575, Cys-578, and Cys-583.

It belongs to the ThiC family. In terms of assembly, homodimer. [4Fe-4S] cluster is required as a cofactor.

The enzyme catalyses 5-amino-1-(5-phospho-beta-D-ribosyl)imidazole + S-adenosyl-L-methionine = 4-amino-2-methyl-5-(phosphooxymethyl)pyrimidine + CO + 5'-deoxyadenosine + formate + L-methionine + 3 H(+). The protein operates within cofactor biosynthesis; thiamine diphosphate biosynthesis. Functionally, catalyzes the synthesis of the hydroxymethylpyrimidine phosphate (HMP-P) moiety of thiamine from aminoimidazole ribotide (AIR) in a radical S-adenosyl-L-methionine (SAM)-dependent reaction. This is Phosphomethylpyrimidine synthase from Pseudomonas fluorescens (strain ATCC BAA-477 / NRRL B-23932 / Pf-5).